The sequence spans 137 residues: Putative pre-16S rRNA nuclease (137 aa).

Belongs to the YqgF nuclease family.

The protein localises to the cytoplasm. Could be a nuclease involved in processing of the 5'-end of pre-16S rRNA. This chain is Putative pre-16S rRNA nuclease, found in Clostridium botulinum (strain 657 / Type Ba4).